A 320-amino-acid polypeptide reads, in one-letter code: Heterogeneous nuclear ribonucleoprotein A1 (320 aa).

The residue at position 1 (Met1) is an N-acetylmethionine. N-acetylserine; in Heterogeneous nuclear ribonucleoprotein A1, N-terminally processed is present on Ser2. Phosphoserine is present on Ser2. Lys3 is modified (N6-acetyllysine; alternate). A Glycyl lysine isopeptide (Lys-Gly) (interchain with G-Cter in SUMO2); alternate cross-link involves residue Lys3. Phosphoserine is present on residues Ser4 and Ser6. Positions 4-94 are globular A domain; it reads SESPKEPEQL…EPKRAVSRED (91 aa). A Glycyl lysine isopeptide (Lys-Gly) (interchain with G-Cter in SUMO2) cross-link involves residue Lys8. 2 consecutive RRM domains span residues 14 to 97 and 105 to 184; these read RKLF…DSQR and KKIF…LSKQ. Ser22 is subject to Phosphoserine. A Glycyl lysine isopeptide (Lys-Gly) (interchain with G-Cter in SUMO2) cross-link involves residue Lys78. The globular B domain stretch occupies residues 95–185; it reads SQRPGAHLTV…EVRKALSKQE (91 aa). Residue Lys113 forms a Glycyl lysine isopeptide (Lys-Gly) (interchain with G-Cter in SUMO) linkage. Residues Lys179 and Lys183 each participate in a glycyl lysine isopeptide (Lys-Gly) (interchain with G-Cter in SUMO2) cross-link. A disordered region spans residues 182 to 216; that stretch reads SKQEMASASSSQRGRSGSGNFGGGRGGGFGGNDNF. Ser192 is subject to Phosphoserine; by MKNK2. At Arg194 the chain carries Asymmetric dimethylarginine; alternate. Arg194 is subject to Dimethylated arginine; alternate. The residue at position 194 (Arg194) is an Omega-N-methylarginine; alternate. Residues 197 to 216 are compositionally biased toward gly residues; that stretch reads SGSGNFGGGRGGGFGGNDNF. Ser199 is subject to Phosphoserine. An asymmetric dimethylarginine; alternate mark is found at Arg206, Arg218, Arg225, and Arg232. Arg206 carries the dimethylated arginine; alternate modification. Omega-N-methylarginine; alternate is present on residues Arg206, Arg218, Arg225, and Arg232. Residues 218 to 240 are RNA-binding RGG-box; the sequence is RGGNFSGRGGFGGSRGGGGYGGS. Arg225 carries the dimethylated arginine; alternate modification. The interval 268 to 305 is nuclear targeting sequence; sequence NQSSNFGPMKGGNFGGRSLGPYGGGGQYFAKPRNQGGY. Positions 277–294 are enriched in gly residues; the sequence is KGGNFGGRSLGPYGGGGQ. The interval 277–320 is disordered; it reads KGGNFGGRSLGPYGGGGQYFAKPRNQGGYGGSSSSSSYGSGRRF. Arg284 carries the omega-N-methylarginine modification. Ser285 is modified (phosphoserine). N6-acetyllysine; alternate is present on Lys298. Residue Lys298 forms a Glycyl lysine isopeptide (Lys-Gly) (interchain with G-Cter in SUMO2); alternate linkage. Arg300 carries the omega-N-methylarginine modification. A compositionally biased stretch (low complexity) spans 308 to 320; the sequence is SSSSSSYGSGRRF. Position 309 is a phosphoserine (Ser309). Phosphoserine; by MKNK2 occurs at positions 310, 311, and 312. Ser313 and Ser316 each carry phosphoserine. Position 318 is an omega-N-methylarginine (Arg318).

In terms of assembly, identified in the spliceosome C complex. Identified in a IGF2BP1-dependent mRNP granule complex containing untranslated mRNAs. Interacts with SEPT6, C9orf72, KHDRBS1, UBQLN2. Interacts with PPIA/CYPA. Post-translationally, sumoylated.

The protein localises to the nucleus. It is found in the cytoplasm. Its function is as follows. Involved in the packaging of pre-mRNA into hnRNP particles, transport of poly(A) mRNA from the nucleus to the cytoplasm and modulation of splice site selection. Plays a role in the splicing of pyruvate kinase PKM by binding repressively to sequences flanking PKM exon 9, inhibiting exon 9 inclusion and resulting in exon 10 inclusion and production of the PKM M2 isoform. Binds to the IRES and thereby inhibits the translation of the apoptosis protease activating factor APAF1. May bind to specific miRNA hairpins. The protein is Heterogeneous nuclear ribonucleoprotein A1 (HNRNPA1) of Macaca mulatta (Rhesus macaque).